The chain runs to 439 residues: Hemagglutinin-esterase (439 aa).

A signal peptide spans 1–22 (MGRMCIAMAPRTLLLLIGCQLV). The segment at 12–132 (TLLLLIGCQL…DNNKWMGNKA (121 aa)) is esterase domain 1. At 23–407 (FGFNEPINIV…PVCLYDPLPV (385 aa)) the chain is on the virion surface side. Ser-45 serves as the catalytic Nucleophile. Cys-49 and Cys-70 form a disulfide bridge. Residue Asn-94 is glycosylated (N-linked (GlcNAc...) asparagine; by host). Cys-118 and Cys-167 form a disulfide bridge. Residues 133 to 281 (RFYALLYKKM…GNYKAVSLEY (149 aa)) are receptor binding. N-linked (GlcNAc...) asparagine; by host glycosylation is found at Asn-196, Asn-246, Asn-309, and Asn-316. 2 disulfide bridges follow: Cys-202/Cys-291 and Cys-210/Cys-264. Residues 282-395 (LLTIPSKAIC…HCPTAANIGY (114 aa)) form an esterase domain 2 region. Cys-322 and Cys-327 are joined by a disulfide. N-linked (GlcNAc...) asparagine; by host glycosylation is present at Asn-331. Residues Asp-342 and His-345 each act as charge relay system in the active site. Asn-360 and Asn-374 each carry an N-linked (GlcNAc...) asparagine; by host glycan. An intrachain disulfide couples Cys-363 to Cys-387. The chain crosses the membrane as a helical span at residues 408 to 428 (ILLGVLLGIAVLIIVFLILYF). The Intravirion segment spans residues 429–439 (MADSSVRLHEA).

It belongs to the influenza type C/coronaviruses hemagglutinin-esterase family. Homodimer; disulfide-linked. Forms a complex with the M protein in the pre-Golgi. Associates then with S-M complex to form a ternary complex S-M-HE. Post-translationally, N-glycosylated in the host RER.

It localises to the virion membrane. The protein resides in the host cell membrane. It catalyses the reaction N-acetyl-9-O-acetylneuraminate + H2O = N-acetylneuraminate + acetate + H(+). It carries out the reaction N-acetyl-4-O-acetylneuraminate + H2O = N-acetylneuraminate + acetate + H(+). Structural protein that makes short spikes at the surface of the virus. Contains receptor binding and receptor-destroying activities. Mediates de-O-acetylation of N-acetyl-4-O-acetylneuraminic acid, which is probably the receptor determinant recognized by the virus on the surface of erythrocytes and susceptible cells. This receptor-destroying activity is important for virus release as it probably helps preventing self-aggregation and ensures the efficient spread of the progeny virus from cell to cell. May serve as a secondary viral attachment protein for initiating infection, the spike protein being the major one. May become a target for both the humoral and the cellular branches of the immune system. This Rat coronavirus (strain 681) (RCV-SDAV) protein is Hemagglutinin-esterase.